We begin with the raw amino-acid sequence, 279 residues long: Dermonecrotic toxin LspiSicTox-betaIE3i (279 aa).

His-5 is an active-site residue. The Mg(2+) site is built by Glu-25 and Asp-27. The active-site Nucleophile is the His-41. Intrachain disulfides connect Cys-45-Cys-51 and Cys-47-Cys-190. Residue Asp-85 participates in Mg(2+) binding.

The protein belongs to the arthropod phospholipase D family. Class II subfamily. Requires Mg(2+) as cofactor. Expressed by the venom gland.

The protein localises to the secreted. It carries out the reaction an N-(acyl)-sphingosylphosphocholine = an N-(acyl)-sphingosyl-1,3-cyclic phosphate + choline. The enzyme catalyses an N-(acyl)-sphingosylphosphoethanolamine = an N-(acyl)-sphingosyl-1,3-cyclic phosphate + ethanolamine. The catalysed reaction is a 1-acyl-sn-glycero-3-phosphocholine = a 1-acyl-sn-glycero-2,3-cyclic phosphate + choline. It catalyses the reaction a 1-acyl-sn-glycero-3-phosphoethanolamine = a 1-acyl-sn-glycero-2,3-cyclic phosphate + ethanolamine. Dermonecrotic toxins cleave the phosphodiester linkage between the phosphate and headgroup of certain phospholipids (sphingolipid and lysolipid substrates), forming an alcohol (often choline) and a cyclic phosphate. This toxin acts on sphingomyelin (SM). It may also act on ceramide phosphoethanolamine (CPE), lysophosphatidylcholine (LPC) and lysophosphatidylethanolamine (LPE), but not on lysophosphatidylserine (LPS), and lysophosphatidylglycerol (LPG). It acts by transphosphatidylation, releasing exclusively cyclic phosphate products as second products. Induces dermonecrosis, hemolysis, increased vascular permeability, edema, inflammatory response, and platelet aggregation. The chain is Dermonecrotic toxin LspiSicTox-betaIE3i from Loxosceles spinulosa (Recluse spider).